We begin with the raw amino-acid sequence, 157 residues long: 6,7-dimethyl-8-ribityllumazine synthase (157 aa).

5-amino-6-(D-ribitylamino)uracil contacts are provided by residues F24, 56 to 58, and 79 to 81; these read SFE and VLI. 84-85 is a (2S)-2-hydroxy-3-oxobutyl phosphate binding site; sequence ET. H87 functions as the Proton donor in the catalytic mechanism. 5-amino-6-(D-ribitylamino)uracil is bound at residue F112. R126 contributes to the (2S)-2-hydroxy-3-oxobutyl phosphate binding site.

Belongs to the DMRL synthase family.

The catalysed reaction is (2S)-2-hydroxy-3-oxobutyl phosphate + 5-amino-6-(D-ribitylamino)uracil = 6,7-dimethyl-8-(1-D-ribityl)lumazine + phosphate + 2 H2O + H(+). It participates in cofactor biosynthesis; riboflavin biosynthesis; riboflavin from 2-hydroxy-3-oxobutyl phosphate and 5-amino-6-(D-ribitylamino)uracil: step 1/2. Its function is as follows. Catalyzes the formation of 6,7-dimethyl-8-ribityllumazine by condensation of 5-amino-6-(D-ribitylamino)uracil with 3,4-dihydroxy-2-butanone 4-phosphate. This is the penultimate step in the biosynthesis of riboflavin. This is 6,7-dimethyl-8-ribityllumazine synthase from Pyrococcus furiosus (strain ATCC 43587 / DSM 3638 / JCM 8422 / Vc1).